The primary structure comprises 397 residues: MTTLLNPYFGEFGGMYVPQILMPALRQLEEAFVSAQKDPEFQAQFNDLLKNYAGRPTALTKCQNITAGTNTTLYLKREDLLHGGAHKTNQVLGQALLAKRMGKTEIIAETGAGQHGVASALASALLGLKCRIYMGAKDVERQSPNVFRMHLMGAEVIPVHSGSATLKDACNEALRDWSGSYETAHYMLGTAAGPHPYPTIVREFQRMIGEETKAQILEREGRLPDAVIACVGGGSNAIGMFADFINETDVGLIGVEPGGHGIETGEHGAPLKHGRVGIYFGMKAPMMQTEDGQIEESYSISAGLDFPSVGPQHAYLNSTGRADYVSITDDEALEAFKTLCLHEGIIPALESSHALAHALKMMRENPEKEQLLVVNLSGRGDKDIFTVHDILKARGEI.

Lys87 carries the post-translational modification N6-(pyridoxal phosphate)lysine.

This sequence belongs to the TrpB family. In terms of assembly, tetramer of two alpha and two beta chains. The cofactor is pyridoxal 5'-phosphate.

The enzyme catalyses (1S,2R)-1-C-(indol-3-yl)glycerol 3-phosphate + L-serine = D-glyceraldehyde 3-phosphate + L-tryptophan + H2O. It participates in amino-acid biosynthesis; L-tryptophan biosynthesis; L-tryptophan from chorismate: step 5/5. In terms of biological role, the beta subunit is responsible for the synthesis of L-tryptophan from indole and L-serine. This Escherichia coli O17:K52:H18 (strain UMN026 / ExPEC) protein is Tryptophan synthase beta chain.